Consider the following 236-residue polypeptide: UPF0257 lipoprotein YnfC (236 aa).

Positions 1 to 16 (MKYKLLPCLLAILLTG) are cleaved as a signal peptide. The N-palmitoyl cysteine moiety is linked to residue C17. Residue C17 is the site of S-diacylglycerol cysteine attachment.

This sequence belongs to the UPF0257 family.

The protein localises to the cell membrane. This is UPF0257 lipoprotein YnfC from Escherichia coli O157:H7.